A 257-amino-acid polypeptide reads, in one-letter code: MLEIIYQDEHIVAVNKPAGWLVHRSWLDRNETVFVMQTVRDQIGQHVYTVHRLDRPTSGVLLMALSSDVARMLSLQFEQHQIQKTYHAVVRGYVLEGGTVDYAMAEELDKIADKFAKSDKAPQPSVSHYEALAQVEVPLAIGRYETARYSLVALKPETGRKHQLRRHMAHIRHPIIGDSTHGDLRQNRGVAQHFGCSRLMLHASHLHLNHPVTGEALTLTARWDEPWQGLMSQFGWSGIAPHLERVEFPLTASQDNE.

The active site involves Asp54.

It belongs to the pseudouridine synthase RluA family.

It carries out the reaction uridine(65) in tRNA = pseudouridine(65) in tRNA. In terms of biological role, responsible for synthesis of pseudouridine from uracil-65 in transfer RNAs. The polypeptide is tRNA pseudouridine synthase C (truC) (Yersinia pestis).